The chain runs to 249 residues: Low affinity immunoglobulin gamma Fc region receptor III-A (249 aa).

Residues 1-20 (MWYLLLPTALLLTVSSGVGA) form the signal peptide. Topologically, residues 21 to 203 (GLQKAVVNLD…SPSSFLPWHQ (183 aa)) are extracellular. Ig-like C2-type domains are found at residues 31-103 (PEWV…QLDV) and 117-188 (FQEG…LQIS). Intrachain disulfides connect cysteine 46/cysteine 88 and cysteine 127/cysteine 171. N-linked (GlcNAc...) asparagine glycans are attached at residues asparagine 55 and asparagine 62. Asparagine 179 is a glycosylation site (N-linked (GlcNAc...) asparagine). Residues 204–224 (ITFCLLIGLLFAIDTVLYFSV) traverse the membrane as a helical segment. The Cytoplasmic segment spans residues 225 to 249 (QRSLQSSVAVYEEPKLHWSKEPQDK). Tyrosine 235 is modified (phosphotyrosine).

As to quaternary structure, forms a heterooligomeric complex with ITAM-containing signaling subunits FCER1G. Interacts (via transmembrane domain) with signaling subunits; this interaction is a prerequisite for receptor complex expression on the cell surface and intracellular signal transduction. Binds the Fc region of antigen-complexed IgG. N-glycosylated. In terms of processing, phosphorylated following receptor ligation.

Its subcellular location is the cell membrane. Receptor for the invariable Fc fragment of immunoglobulin gamma (IgG). Binds with intermediate affinity to both IgG2a and IgG2b. Can bind to IgG2a and IgG2b monomers. Does not display binding to IgG1 or IgG3. Recognizes neutralizing virus-specific IgGs displayed on the cell surface of infected cells and triggers antibody-dependent cellular cytotoxicity (ADCC). Confers protection to lethal influenza virus infection. On splenic dendritic cells, uptakes antigen immune complexes and efficiently divert them into MHC class I and II antigen presentation pathways to provide for superior priming of CD4-positive and CD8-positive T cell immune responses. Mediates neutrophil activation by IgG complexes redundantly with FCGR2A. Plays a role in promoting bone resorption by enhancing osteoclast differentiation following binding to IgG2a. Also acts as a receptor for the Fc region of immunoglobulin epsilon (IgE). Binds with low affinity to both the a and b allotypes of IgE. Has also been shown to bind to IgE allotype a only but not to allotype b. Binds aggregated IgE but not the monomeric form and bound monomeric IgG is readily displaced by IgE complexes. Binding to IgE promotes macrophage-mediated phagocytosis, antigen presentation to T cells, production of pro-inflammatory cytokines and the late phase of cutaneous allergic reactions. Mediates enhanced ADCC in response to afucosylated IgGs. In Rattus norvegicus (Rat), this protein is Low affinity immunoglobulin gamma Fc region receptor III-A.